Here is a 317-residue protein sequence, read N- to C-terminus: CXXC-type zinc finger protein 5 (317 aa).

The segment covering 1–10 (MSSLGGGSQD) has biased composition (gly residues). The disordered stretch occupies residues 1-92 (MSSLGGGSQD…SFGSSGGGGS (92 aa)). 2 stretches are compositionally biased toward low complexity: residues 11-27 (AGGSSSSSNTNSSSGSG) and 36-51 (STAVAATTAPTSVADD). A CXXC-type zinc finger spans residues 251-292 (GKKKRKRCGMCAPCRRRINCEQCSSCRNRKTGHQICKFRKCE). A Nuclear localization signal motif is present at residues 252 to 257 (KKKRKR). Positions 258, 261, 264, 270, 273, 276, 286, and 291 each coordinate Zn(2+).

As to quaternary structure, interacts with DVL1. Interacts with RBPJ.

It is found in the nucleus. The protein resides in the cytoplasm. Functionally, may indirectly participate in activation of the NF-kappa-B and MAPK pathways. Acts as a mediator of BMP4-mediated modulation of canonical Wnt signaling activity in neural stem cells. Required for DNA damage-induced ATM phosphorylation, p53 activation and cell cycle arrest. Involved in myelopoiesis. Binds to the oxygen responsive element of COX4I2 and represses its transcription under hypoxia conditions (4% oxygen), as well as normoxia conditions (20% oxygen). May repress COX4I2 transactivation induced by CHCHD2 and RBPJ. Binds preferentially to DNA containing cytidine-phosphate-guanosine (CpG) dinucleotides over CpH (H=A, T, and C), hemimethylated-CpG and hemimethylated-hydroxymethyl-CpG. This is CXXC-type zinc finger protein 5 (Cxxc5) from Mus musculus (Mouse).